A 635-amino-acid chain; its full sequence is Probable clathrin assembly protein At4g32285 (635 aa).

Residues 23–159 form the ENTH domain; it reads VASNMAPDLE…ELALFERRGR (137 aa). The interval 157-208 is disordered; that stretch reads RGRNGGGSSSSHQSNGDDGYNRSRDDFRSPPPRTYDYETGNGFGMPKRSRSF. Over residues 165 to 174 the composition is skewed to low complexity; it reads SSSHQSNGDD. Positions 175-184 are enriched in basic and acidic residues; the sequence is GYNRSRDDFR. Residue Ser-207 is modified to Phosphoserine. A Phosphothreonine modification is found at Thr-224. A compositionally biased stretch (basic and acidic residues) spans 357-369; that stretch reads AKRAKSPERKEIE. The segment at 357 to 412 is disordered; sequence AKRAKSPERKEIEAPPAPAPPVEEPVDMNEIKALPPPENHTPPPPPAPEPKPQQPQ. Pro residues predominate over residues 390-409; it reads LPPPENHTPPPPPAPEPKPQ.

The protein resides in the membrane. It localises to the clathrin-coated pit. It is found in the golgi apparatus. Its subcellular location is the cytoplasmic vesicle. The protein localises to the clathrin-coated vesicle. This chain is Probable clathrin assembly protein At4g32285, found in Arabidopsis thaliana (Mouse-ear cress).